The primary structure comprises 570 residues: Conserved oligomeric Golgi complex subunit 8 (570 aa).

Belongs to the COG8 family. Component of the conserved oligomeric Golgi complex which is composed of eight different subunits and is required for normal Golgi morphology and localization.

Its subcellular location is the golgi apparatus membrane. Required for normal Golgi function. This is Conserved oligomeric Golgi complex subunit 8 from Drosophila melanogaster (Fruit fly).